Reading from the N-terminus, the 195-residue chain is uncharacterized protein (195 aa).

The signal sequence occupies residues 1–17 (MKASLITAFVLPLLALA). An N-linked (GlcNAc...) asparagine glycan is attached at Asn75.

It localises to the secreted. This is an uncharacterized protein from Arthroderma benhamiae (strain ATCC MYA-4681 / CBS 112371) (Trichophyton mentagrophytes).